A 78-amino-acid polypeptide reads, in one-letter code: U-scoloptoxin(04)-Er1e (78 aa).

The N-terminal stretch at M1–A24 is a signal peptide. Residues R25–R28 constitute a propeptide that is removed on maturation.

The protein belongs to the scoloptoxin-04 family. Contains 2 disulfide bonds. Expressed by the venom gland.

Its subcellular location is the secreted. The polypeptide is U-scoloptoxin(04)-Er1e (Ethmostigmus rubripes (Giant centipede)).